Reading from the N-terminus, the 874-residue chain is Alanine--tRNA ligase (874 aa).

Positions 564, 568, 665, and 669 each coordinate Zn(2+).

It belongs to the class-II aminoacyl-tRNA synthetase family. It depends on Zn(2+) as a cofactor.

It localises to the cytoplasm. The enzyme catalyses tRNA(Ala) + L-alanine + ATP = L-alanyl-tRNA(Ala) + AMP + diphosphate. Its function is as follows. Catalyzes the attachment of alanine to tRNA(Ala) in a two-step reaction: alanine is first activated by ATP to form Ala-AMP and then transferred to the acceptor end of tRNA(Ala). Also edits incorrectly charged Ser-tRNA(Ala) and Gly-tRNA(Ala) via its editing domain. The polypeptide is Alanine--tRNA ligase (Burkholderia thailandensis (strain ATCC 700388 / DSM 13276 / CCUG 48851 / CIP 106301 / E264)).